A 122-amino-acid polypeptide reads, in one-letter code: Large ribosomal subunit protein bL12 (122 aa).

The tract at residues 96-122 (APKSLKTGLSKDEANEMKKKLEDAGAT) is disordered. The segment covering 104 to 122 (LSKDEANEMKKKLEDAGAT) has biased composition (basic and acidic residues).

It belongs to the bacterial ribosomal protein bL12 family. Homodimer. Part of the ribosomal stalk of the 50S ribosomal subunit. Forms a multimeric L10(L12)X complex, where L10 forms an elongated spine to which 2 to 4 L12 dimers bind in a sequential fashion. Binds GTP-bound translation factors.

Its function is as follows. Forms part of the ribosomal stalk which helps the ribosome interact with GTP-bound translation factors. Is thus essential for accurate translation. The polypeptide is Large ribosomal subunit protein bL12 (Liberibacter asiaticus (Citrus greening disease)).